We begin with the raw amino-acid sequence, 337 residues long: Phenylalanine--tRNA ligase alpha subunit (337 aa).

Position 252 (Glu-252) interacts with Mg(2+).

It belongs to the class-II aminoacyl-tRNA synthetase family. Phe-tRNA synthetase alpha subunit type 1 subfamily. As to quaternary structure, tetramer of two alpha and two beta subunits. The cofactor is Mg(2+).

Its subcellular location is the cytoplasm. It carries out the reaction tRNA(Phe) + L-phenylalanine + ATP = L-phenylalanyl-tRNA(Phe) + AMP + diphosphate + H(+). The polypeptide is Phenylalanine--tRNA ligase alpha subunit (Cellvibrio japonicus (strain Ueda107) (Pseudomonas fluorescens subsp. cellulosa)).